A 478-amino-acid chain; its full sequence is Melanopsin (478 aa).

Residues 1–14 are compositionally biased toward pro residues; it reads MNPPSGPRVPPSPT. Residues 1–32 form a disordered region; that stretch reads MNPPSGPRVPPSPTQEPSCMATPAPPSWWDSS. At 1–72 the chain is on the extracellular side; the sequence is MNPPSGPRVP…VDVPDHAHYT (72 aa). Residues 73–93 form a helical membrane-spanning segment; the sequence is LGTVILLVGLTGMLGNLTVIY. Over 94-107 the chain is Cytoplasmic; the sequence is TFCRSRSLRTPANM. Residues 108–128 form a helical membrane-spanning segment; it reads FIINLAVSDFLMSFTQAPVFF. Residues 129-144 are Extracellular-facing; the sequence is TSSLYKQWLFGETGCE. Cysteine 143 and cysteine 221 are oxidised to a cystine. A helical transmembrane segment spans residues 145–165; it reads FYAFCGALFGISSMITLTAIA. Over 166-188 the chain is Cytoplasmic; that stretch reads LDRYLVITRPLATFGVASKRRAA. A helical transmembrane segment spans residues 189–209; it reads FVLLGVWLYALAWSLPPFFGW. The Extracellular portion of the chain corresponds to 210–238; the sequence is SAYVPEGLLTSCSWDYMSFTPAVRAYTML. The chain crosses the membrane as a helical span at residues 239–259; that stretch reads LCCFVFFLPLLIIIYCYIFIF. The Cytoplasmic portion of the chain corresponds to 260–296; the sequence is RAIRETGRALQTFGACKGNGESLWQRQRLQSECKMAK. A helical membrane pass occupies residues 297 to 317; sequence IMLLVILLFVLSWAPYSAVAL. Residues 318–332 are Extracellular-facing; the sequence is VAFAGYAHVLTPYMS. The chain crosses the membrane as a helical span at residues 333–353; it reads SVPAVIAKASAIHNPIIYAIT. Lysine 340 carries the post-translational modification N6-(retinylidene)lysine. The Cytoplasmic portion of the chain corresponds to 354–478; that stretch reads HPKYRVAIAQ…GLIPSQDPRM (125 aa). The segment at 440 to 478 is disordered; it reads LYGQGLEDLEAKAPPRPQGHEAETPGKTKGLIPSQDPRM. Residues 448–465 show a composition bias toward basic and acidic residues; that stretch reads LEAKAPPRPQGHEAETPG.

Belongs to the G-protein coupled receptor 1 family. Opsin subfamily. In terms of tissue distribution, expressed in the retina.

The protein resides in the cell membrane. It is found in the cell projection. The protein localises to the axon. It localises to the dendrite. Its subcellular location is the perikaryon. Its function is as follows. Photoreceptor that binds cis-retinaldehydes. Contributes to pupillar reflex, photoentrainment and other non-image forming responses to light. May be involved in the optokinetic visual tracking response. May be involved in the regulation of retinal hyaloid vessel growth and regression. The polypeptide is Melanopsin (OPN4) (Homo sapiens (Human)).